A 2137-amino-acid polypeptide reads, in one-letter code: Pecanex-like protein 2 (2137 aa).

2 helical membrane passes run 34–54 (CHLY…LAFP) and 57–77 (AIIV…IKLV). 4 disordered regions span residues 92 to 163 (QQKP…LELS), 225 to 251 (NGKG…VDKG), 402 to 530 (EKTS…HARV), and 545 to 572 (SAEI…QMPN). Over residues 96–114 (SRKEEKPNKDKEAKGEHIT) the composition is skewed to basic and acidic residues. Positions 116-125 (HRNPSNNRQI) are enriched in polar residues. N-linked (GlcNAc...) asparagine glycosylation occurs at Asn136. Positions 146–156 (SRGQSITSHHS) are enriched in polar residues. Asn449 is a glycosylation site (N-linked (GlcNAc...) asparagine). A compositionally biased stretch (basic and acidic residues) spans 479 to 490 (IKDHSSSSREPW). The span at 510–520 (GQTNLDPSSCK) shows a compositional bias: polar residues. N-linked (GlcNAc...) asparagine glycosylation is found at Asn550, Asn572, Asn587, Asn598, and Asn613. Positions 593 to 602 (ASSQLNGSAE) are enriched in polar residues. The interval 593–612 (ASSQLNGSAEQNEESGLLRD) is disordered. Disordered regions lie at residues 621–655 (EILE…CTQP) and 740–763 (AREM…SGDP). A compositionally biased stretch (polar residues) spans 630 to 655 (GHSSKQGKPDLQSQDHTSTGPACTQP). The span at 746-760 (SSSSTTTSESQDPSS) shows a compositional bias: low complexity. 13 consecutive transmembrane segments (helical) span residues 844–864 (LAIL…SQGF), 868–888 (MWVL…LKSV), 901–921 (QIIT…ILLL), 952–972 (YLIV…FPQI), 983–1003 (IDML…VYSV), 1029–1049 (HIPA…YHLS), 1099–1119 (LIVC…TVFL), 1124–1144 (FLSI…HYVL), 1193–1213 (YILY…LISN), 1237–1257 (SFCN…FFHF), 1265–1285 (SFLL…DLLH), 1302–1322 (GSSF…MLFF), and 1324–1344 (TIAT…VIFI). Residues Asn1412, Asn1553, and Asn1818 are each glycosylated (N-linked (GlcNAc...) asparagine). The segment at 1876–1958 (RQHSGGNIED…RPPMLSSSGP (83 aa)) is disordered. Composition is skewed to polar residues over residues 1901 to 1910 (SGGSQESSAE), 1920 to 1929 (GVSSCEGTQR), and 1937 to 1958 (SQSV…SSGP). N-linked (GlcNAc...) asparagine glycosylation is present at Asn2054.

The protein belongs to the pecanex family.

The protein localises to the membrane. In terms of biological role, may play a role in tumorigenesis of colorectal carcinomas with high microsatellite instability (MSI-H). The sequence is that of Pecanex-like protein 2 from Homo sapiens (Human).